Consider the following 2472-residue polypeptide: Nuclear receptor corepressor 2 (2472 aa).

3 disordered regions span residues methionine 1 to proline 20, arginine 47 to serine 168, and isoleucine 190 to glutamate 220. Residue arginine 18 is modified to Asymmetric dimethylarginine. Positions serine 51–glutamine 60 are enriched in polar residues. Phosphoserine occurs at positions 54 and 67. 2 stretches are compositionally biased toward basic and acidic residues: residues arginine 78 to serine 88 and glycine 96 to leucine 112. Phosphoserine is present on residues serine 149 and serine 152. Residues serine 165 to proline 207 are a coiled coil. Basic and acidic residues predominate over residues glutamate 203–lysine 212. At serine 215 the chain carries Phosphoserine. The tract at residues leucine 254 to lysine 312 is interaction with SIN3A/B. The deacetylase activation domain (DAD) stretch occupies residues methionine 389–lysine 480. In terms of domain architecture, SANT 1 spans glutamine 427 to asparagine 478. 1D-myo-inositol 1,4,5,6-tetrakisphosphate is bound by residues lysine 449, tyrosine 470, and tyrosine 471. 3 disordered regions span residues tyrosine 487–threonine 618, histidine 665–isoleucine 1107, and serine 1173–serine 1197. The stretch at lysine 492–valine 560 forms a coiled coil. Phosphoserine is present on serine 493. The span at glutamine 494–glutamine 507 shows a compositional bias: low complexity. A compositionally biased stretch (basic and acidic residues) spans serine 512–aspartate 548. A Phosphothreonine modification is found at threonine 549. The residue at position 550 (serine 550) is a Phosphoserine. Residues alanine 592 to serine 609 show a composition bias toward polar residues. The 52-residue stretch at asparagine 606–asparagine 657 folds into the SANT 2 domain. Residues leucine 658–threonine 682 are a coiled coil. The span at asparagine 709 to glutamate 718 shows a compositional bias: acidic residues. Residues valine 739–serine 750 show a composition bias toward polar residues. Phosphoserine is present on residues serine 747 and serine 750. Pro residues-rich tracts occupy residues threonine 773–glutamate 782 and glutamate 789–proline 811. Basic and acidic residues-rich tracts occupy residues glutamate 831–glutamate 850 and glutamate 859–glutamate 868. Position 878 is an N6-acetyllysine (lysine 878). Residues glycine 905–threonine 919 are compositionally biased toward low complexity. Serine 938 is modified (phosphoserine). A Phosphothreonine modification is found at threonine 945. At serine 955 the chain carries Phosphoserine. An N6-acetyllysine modification is found at lysine 958. Basic and acidic residues predominate over residues lysine 978 to valine 988. Pro residues predominate over residues proline 989 to threonine 1000. The span at leucine 1090–valine 1101 shows a compositional bias: low complexity. N6-acetyllysine occurs at positions 1181 and 1209. At serine 1220 the chain carries Phosphoserine. 3 disordered regions span residues serine 1254 to lysine 1277, leucine 1345 to lysine 1378, and proline 1410 to valine 1443. Threonine 1350 is subject to Phosphothreonine. The segment covering aspartate 1359 to proline 1368 has biased composition (basic and acidic residues). 3 positions are modified to phosphoserine: serine 1449, serine 1509, and serine 1565. The disordered stretch occupies residues lysine 1479–isoleucine 1578. Arginine 1624 is subject to Asymmetric dimethylarginine. Residues threonine 1734–leucine 1826 are disordered. A compositionally biased stretch (low complexity) spans serine 1740–proline 1753. 2 positions are modified to phosphoserine: serine 1746 and serine 1749. A compositionally biased stretch (basic and acidic residues) spans serine 1765 to serine 1778. Polar residues predominate over residues arginine 1807–leucine 1826. The residue at position 1819 (serine 1819) is a Phosphoserine. Arginine 1854 bears the Omega-N-methylarginine mark. 3 disordered regions span residues arginine 1857–proline 1878, lysine 1898–serine 1986, and alanine 2001–alanine 2078. The segment covering glutamate 1899 to alanine 1913 has biased composition (basic and acidic residues). N6-acetyllysine is present on lysine 1920. The segment covering glutamate 1925–serine 1938 has biased composition (low complexity). A Phosphoserine modification is found at serine 1963. Position 1983 is an N6-acetyllysine (lysine 1983). A phosphoserine mark is found at serine 2004, serine 2012, serine 2015, serine 2016, and serine 2018. Threonine 2020 carries the post-translational modification Phosphothreonine. Residues threonine 2020–histidine 2043 show a composition bias toward basic and acidic residues. Residue serine 2035 is modified to Phosphoserine. The segment covering leucine 2064–leucine 2075 has biased composition (low complexity). The tract at residues arginine 2086–leucine 2090 is required for interaction with RARA in the absence of its ligand. The short motif at isoleucine 2094–isoleucine 2098 is the CORNR box of ID1 element. The interval arginine 2132–phenylalanine 2226 is disordered. Phosphoserine is present on residues serine 2161, serine 2181, and serine 2215. Positions leucine 2296–isoleucine 2300 match the CORNR box of ID2 motif. The segment at glycine 2343–proline 2459 is disordered. Serine 2371 carries the phosphoserine modification. Residues leucine 2439 to histidine 2450 show a composition bias toward low complexity.

The protein belongs to the N-CoR nuclear receptor corepressors family. As to quaternary structure, forms a large corepressor complex that contains SIN3A/B and histone deacetylases HDAC1 and HDAC2. This complex associates with the thyroid (TR) and the retinoid acid receptors (RAR) in the absence of ligand, and may stabilize their interaction with TFIIB. Interacts directly with RARA in the absence of ligand; the interaction represses RARA activity. Interacts (isoform SMRT) with HDAC10. Interacts with MINT. Component of the N-Cor repressor complex, at least composed of NCOR1, NCOR2, HDAC3, TBL1X, TBL1R, CORO2A and GPS2. Interacts with CBFA2T3 and ATXN1L. Interacts with RARB; the interaction is weak and does not repress RARB transactivational activity. Interacts (via 1D-myo-inositol 1,4,5,6-tetrakisphosphate) with HDAC3; promoting the histone deacetylase activity of HDAC3. Interacts with HDAC7 and C1D. Interacts with NR4A2; this interaction increases in the absence of PITX3. Interacts with BCL6 (via the BTB domain), required for BCL6 transcriptional repressor activity on a subset of target genes. Forms ternary complexes with BCOR and BCL6 on target gene promoters but, on enhancer elements, interacts with BCL6 and HDAC3 to repress proximal gene expression. May interact with DEAF1. Interacts with RXRA. Interacts with MECP2. Interacts with ZBTB7A. Interacts with AR. Interacts with TBL1Y. Interacts with SANBR (via the BTB domain). Ubiquitous. Also widely expressed in early embryos.

It localises to the nucleus. In terms of biological role, transcriptional corepressor that mediates the transcriptional repression activity of some nuclear receptors by promoting chromatin condensation, thus preventing access of the basal transcription. Acts by recruiting chromatin modifiers, such as histone deacetylases HDAC1, HDAC2 and HDAC3. Required to activate the histone deacetylase activity of HDAC3. Involved in the regulation BCL6-dependent of the germinal center (GC) reactions, mainly through the control of the GC B-cells proliferation and survival. Recruited by ZBTB7A to the androgen response elements/ARE on target genes, negatively regulates androgen receptor signaling and androgen-induced cell proliferation. The polypeptide is Nuclear receptor corepressor 2 (Ncor2) (Mus musculus (Mouse)).